A 596-amino-acid chain; its full sequence is Nucleotidyltransferase lcsQ (596 aa).

A mitochondrion-targeting transit peptide spans 1–22; the sequence is MLLRLSPSRMALKRKLDSFLRN. The disordered stretch occupies residues 475–504; sequence IVAHPGKPSQPADVPETPLSSGASKSKNLD.

This sequence belongs to the tRNA nucleotidyltransferase/poly(A) polymerase family.

The protein localises to the mitochondrion. Functionally, nucleotidyltransferase; part of the gene cluster that mediates the biosynthesis of the lipopeptide antibiotics leucinostatins that show extensive biological activities, including antimalarial, antiviral, antibacterial, antifungal, and antitumor activities, as well as phytotoxic. The function of lcsQ within the leucinostatins biosynthesis has not been identified yet. The chain is Nucleotidyltransferase lcsQ from Purpureocillium lilacinum (Paecilomyces lilacinus).